A 251-amino-acid polypeptide reads, in one-letter code: Ubiquinone/menaquinone biosynthesis C-methyltransferase UbiE (251 aa).

S-adenosyl-L-methionine is bound by residues Thr-74, Asp-95, and 123–124 (NA).

This sequence belongs to the class I-like SAM-binding methyltransferase superfamily. MenG/UbiE family.

The catalysed reaction is a 2-demethylmenaquinol + S-adenosyl-L-methionine = a menaquinol + S-adenosyl-L-homocysteine + H(+). It catalyses the reaction a 2-methoxy-6-(all-trans-polyprenyl)benzene-1,4-diol + S-adenosyl-L-methionine = a 5-methoxy-2-methyl-3-(all-trans-polyprenyl)benzene-1,4-diol + S-adenosyl-L-homocysteine + H(+). It functions in the pathway quinol/quinone metabolism; menaquinone biosynthesis; menaquinol from 1,4-dihydroxy-2-naphthoate: step 2/2. Its pathway is cofactor biosynthesis; ubiquinone biosynthesis. Methyltransferase required for the conversion of demethylmenaquinol (DMKH2) to menaquinol (MKH2) and the conversion of 2-polyprenyl-6-methoxy-1,4-benzoquinol (DDMQH2) to 2-polyprenyl-3-methyl-6-methoxy-1,4-benzoquinol (DMQH2). This Shewanella frigidimarina (strain NCIMB 400) protein is Ubiquinone/menaquinone biosynthesis C-methyltransferase UbiE.